A 157-amino-acid polypeptide reads, in one-letter code: Phosphopantetheine adenylyltransferase (157 aa).

A substrate-binding site is contributed by Thr8. ATP contacts are provided by residues 8–9 (TF) and His16. Substrate is bound by residues Lys40, Thr72, and Arg86. ATP-binding positions include 87-89 (GLR), Glu97, and 122-128 (YSFLSSS).

It belongs to the bacterial CoaD family. Homohexamer. Mg(2+) serves as cofactor.

It is found in the cytoplasm. It carries out the reaction (R)-4'-phosphopantetheine + ATP + H(+) = 3'-dephospho-CoA + diphosphate. It participates in cofactor biosynthesis; coenzyme A biosynthesis; CoA from (R)-pantothenate: step 4/5. Its function is as follows. Reversibly transfers an adenylyl group from ATP to 4'-phosphopantetheine, yielding dephospho-CoA (dPCoA) and pyrophosphate. This is Phosphopantetheine adenylyltransferase from Prochlorococcus marinus (strain MIT 9312).